A 298-amino-acid chain; its full sequence is Protoheme IX farnesyltransferase (298 aa).

The next 8 helical transmembrane spans lie at 26–46 (IVIL…GGPP), 48–68 (LGLT…ANAI), 110–130 (FLVL…GLLF), 147–167 (IVIG…AVTG), 174–194 (VIMF…LALF), 220–240 (ILLY…TGTV), 243–263 (LYLW…VGLL), and 276–296 (TYGW…LDVT).

It belongs to the UbiA prenyltransferase family. Protoheme IX farnesyltransferase subfamily. As to quaternary structure, interacts with CtaA.

The protein localises to the cell membrane. It carries out the reaction heme b + (2E,6E)-farnesyl diphosphate + H2O = Fe(II)-heme o + diphosphate. Its pathway is porphyrin-containing compound metabolism; heme O biosynthesis; heme O from protoheme: step 1/1. Converts heme B (protoheme IX) to heme O by substitution of the vinyl group on carbon 2 of heme B porphyrin ring with a hydroxyethyl farnesyl side group. The sequence is that of Protoheme IX farnesyltransferase from Symbiobacterium thermophilum (strain DSM 24528 / JCM 14929 / IAM 14863 / T).